Reading from the N-terminus, the 947-residue chain is MEASSVLPCKWCTHLQGLLLTASFLTCCHLPTTAQITIELEPPQVIEGENVLIRVNNLTENLITLAWFRGMRIKSPQIGQYTPATKVTVLGPGHSGRETLYSNGSLQIYNVTQEDIGFYSLRIINKHAEIVSITSIYLNVYSSLWTCEHPSPHAKLTIESVPPGISEGGSVLLLVKNLPQNLLSLFWYKGVIAVKKFEIARHIKATNSSVPGPAHTGRETVFSNGSLLLQEVMQSDTGFYTLRTMSTDLKDEVAHVQLYMDTYLLTCYHPLQVKIESLPQNVAVGKTVLLLVHNLPEDFQAFFWYKSAYRRDTYKIAEYKRAMDATILGSAYSSREFIYNNGSMLIIDVTEDDAGYFLLEILREDLKIEKAYIQLHVNSFVSNSKDSASTARLSIESVPPSIVEGGSVLLLVHNLPKNLQSLFWYKGMIAEKKSELIQHIIATSSSLPGPAHSGRETVYNNGSLLLQRVMQNDTQFYTLQTMDTDLKYEVAHVQLQLDTSLSTWYHPLQVKIESLPRNVAVGKSVLFLVHNFPEVFRAFSWYKPAYKSHTSKIVEYHRFTDSATVGAAYRGIEVIFTNGSMVMIDVTEDDAGFYMLEILREDFKVEKAYVQLHVNSFVPNSKVSVSTARLSIESVPPSIVGGESVLLLVHNLPKNLQSLFWYKGVIAEEKSELIQHIIATSSSLPGPAHSGRETVYSNGSLLLQRVMQNDTGFYTLLTMSTDLKDEIAHVQLQLDTSTCCSLLTSDQLIIVPVPRNIAVGKSVLLLVCNVPKDVQTIFWYKSVYRTDIFKIAEYSRSMESTIWGLAHSGKEMVYTNGSLLIQNVTEHDAGLYMLEILHKDYKLERAHVQVHVNNPVSWPFVRVTDTTVRVQSSVVFTCFSADPGVSIRWLFNKQSLQLTERMTLSPSKCQLSIDPVWREDAGKYQCEVSNPVSSKSSLPVRLAVIEE.

Positions 1–34 (MEASSVLPCKWCTHLQGLLLTASFLTCCHLPTTA) are cleaved as a signal peptide. Ig-like V-type domains are found at residues 35–132 (QITI…EIVS), 166–259 (SEGG…VQLY), 270–378 (PLQV…LHVN), 392–498 (RLSI…LQLD), 509–615 (QVKI…LHVN), 642–733 (GESV…VQLQ), and 746–851 (DQLI…VQVH). N-linked (GlcNAc...) asparagine glycosylation is found at N57, N103, N110, N207, N224, N341, N461, N472, N578, N698, N709, N816, and N823. The Ig-like C2-type 1 domain occupies 859–943 (PFVRVTDTTV…SKSSLPVRLA (85 aa)). A disulfide bond links C878 and C926.

This sequence belongs to the immunoglobulin superfamily. CEA family. As to quaternary structure, homodimer.

The protein resides in the cell membrane. It localises to the apical cell membrane. The protein localises to the cell surface. Its function is as follows. Cell surface glycoprotein that plays a role in cell adhesion, intracellular signaling and tumor progression. Mediates homophilic and heterophilic cell adhesion with other carcinoembryonic antigen-related cell adhesion molecules, such as CEACAM6. Plays a role as an oncogene by promoting tumor progression; induces resistance to anoikis of colorectal carcinoma cells. This chain is Cell adhesion molecule CEACAM5, found in Mus musculus (Mouse).